Here is a 508-residue protein sequence, read N- to C-terminus: Cell death protein 3 (508 aa).

The propeptide occupies 1 to 223; that stretch reads MMRQDRRNLL…FHEEDMNYVD (223 aa). The CARD domain occupies 2 to 91; it reads MRQDRRNLLE…HELAAVLEPL (90 aa). Disordered stretches follow at residues 106–130 and 148–184; these read PMSP…TRVH and YTRA…SSAN. Residues 118-127 are compositionally biased toward polar residues; the sequence is LSPSTFSSPT. Residues 171–184 show a composition bias toward low complexity; sequence SPSNSFQSQPSSAN. Active-site residues include His317 and Cys360. Residues 392–407 form a required for interaction with ced-4 region; the sequence is GPLFNFLGCVRPQAQQ.

Belongs to the peptidase C14A family. As to quaternary structure, the active form is probably a heterodimer of the p17 subunit with either the p15 or p13 subunit which are all derived from the precursor by autocatalysis. Interacts with octameric ced-4 (two ced-3 zymogens per one ced-4 octamer); the interaction causes the autoproteolytic cleavage and activation of ced-3. Processed ced-3 also interacts with ced-4 octamer to form a stable holoenzyme. Interacts (via large subunit p17) with csp-3; the interaction prevents ced-3 autoactivation and delays ced-4-induced ced-3 processing. Interacts (via large subunit p17 or small subunit p13 or p15) with csp-2; the interaction inhibits ced-3 autoactivation. Interacts (via propeptide) with nucleoporin npp-14; the interaction tethers ced-3 to the nuclear membrane and prevents its autoprocessing in absence of ced-4. Interacts with dct-1. May form a complex composed of ced-3, ced-4 and mac-1. Post-translationally, autocatalytic cleavage removes the propeptide and generates the catalytic subunit p17 and two non-catalytic subunits p15 and p13; autoproteolysis is induced by ced-4 oligomer. Cleaved by caspase csp-1 probably at Asp-146 and Asp-376.

Its subcellular location is the nucleus membrane. It is found in the perikaryon. It localises to the synapse. The protein localises to the mitochondrion. The protein resides in the cytoplasm. Its subcellular location is the perinuclear region. The catalysed reaction is Strict requirement for an Asp residue at position P1 and has a preferred cleavage sequence of Asp-Glu-Val-Asp-|-.. Octameric ced-4 activates zymogen autoprocessing and enhances activity of processed ced-3. Zymogen autoactivation is inhibited by csp-3. csp-3 has no effect on active ced-3. Zymogen autoactivation is inhibited by csp-2. Inhibited by cysteine protease inhibitor iodoacetic acid (CH3COOI). Inhibited by benzyloxycarbonyl-DEVD-fluoro-methyl ketone (zDEVD-fmk). Inhibited by benzyloxycarbonyl-VAD-fluoro-methyl ketone (zVAD-fmk). Not inhibited by N-[N-(L-3-transcarboxirane-2-carbonyl)-leucyl]-agmatine (E-64) or by the serine and cysteine protease inhibitor L-1-chloro-3-[4-to-osylamido]-7-amino-2-heptanone (TLCK). Functionally, acts as a cysteine protease in controlling programmed cell death (apoptosis) by proteolytically activating or inactivating a wide range of substrates. Component of the egl-1, ced-9, ced-4 and ced-3 apoptotic signaling cascade required for the initiation of programmed cell death in cells fated to die during embryonic and postembryonic development. During oogenesis, required for germline apoptosis downstream of ced-9 and ced-4 but independently of egl-1. By cleaving and activating ced-8, promotes phosphatidylserine exposure on the surface of apoptotic cells; phosphatidylserine is a specific marker only present at the surface of apoptotic cells and acts as a specific signal for engulfment. By cleaving and converting dcr-1 into a deoxyribonuclease (DNase), promotes apoptotic chromosomal DNA fragmentation. By cleaving mitochondrial fission protein drp-1, may regulate the removal of mitochondria during apoptosis. During germline apoptosis, cleaves translation initiation factor ifg-1 (isoform p170) promoting cap-independent translation. During male tail morphogenesis, promotes apoptosis of the tail-spike cell downstream of ced-4 but independently of egl-1 and ced-9. By cleaving cnt-1, prevents the activation of the prosurvival akt-1/2 signaling pathway and thus promotes apoptosis. Downstream of ced-4, may play a role in sex-specific cell apoptosis by cleaving sex-determining protein fem-1. May regulate germline apoptosis in response to DNA damage, probably downstream of let-60/ras and mpk-1 pathway. Cleaves ced-9 in vitro. Cleaves csp-2 isoform b resulting in the removal of the propeptide and the generation of csp-2 subunit p31 in vitro. Independently of its apoptotic role has additional functions. Probably by cleaving and thereby activating actin-severing protein gsnl-1, required for the elimination of transient presynaptic components during larval development downstream of egl-1, ced-9 and ced-4 pathway. Together with ain-1, a component of the miRNA-induced-silencing complex (miRISC), regulates temporal cell fate patterning during larval development. Acts in cell fate patterning by cleaving heterochronic protein lin-28, likely promoting its degradation. Also cleaves heterochronic protein lin-14 and exonuclease disl-2 in vitro. Downstream of calreticulin crt-1 and ced-4 and independently of egl-1 and ced-9, plays a role in the initial steps of axonal regrowth following axotomy. Cleaves 14-3-3-like protein ftt-2, tubulin tbb-2 and calreticulin crt-1 in vitro. Plays also a role in resistance to S.typhimurium-mediated infection. The polypeptide is Cell death protein 3 (Caenorhabditis remanei (Caenorhabditis vulgaris)).